A 271-amino-acid chain; its full sequence is Putative hydro-lyase blr2921 (271 aa).

Belongs to the D-glutamate cyclase family.

The polypeptide is Putative hydro-lyase blr2921 (Bradyrhizobium diazoefficiens (strain JCM 10833 / BCRC 13528 / IAM 13628 / NBRC 14792 / USDA 110)).